The chain runs to 745 residues: Elongation factor G, mitochondrial (745 aa).

Residues 1-15 (MSLITRLLTASSPLR) constitute a mitochondrion transit peptide. In terms of domain architecture, tr-type G spans 40 to 317 (DKIRNIGISA…AVLEYLPNPG (278 aa)). Residues 49–56 (AHIDSGKT), 116–120 (DTPGH), and 170–173 (NKLD) each bind GTP.

It belongs to the TRAFAC class translation factor GTPase superfamily. Classic translation factor GTPase family. EF-G/EF-2 subfamily.

It is found in the mitochondrion. The protein operates within protein biosynthesis; polypeptide chain elongation. Mitochondrial GTPase that catalyzes the GTP-dependent ribosomal translocation step during translation elongation. During this step, the ribosome changes from the pre-translocational (PRE) to the post-translocational (POST) state as the newly formed A-site-bound peptidyl-tRNA and P-site-bound deacylated tRNA move to the P and E sites, respectively. Catalyzes the coordinated movement of the two tRNA molecules, the mRNA and conformational changes in the ribosome. Essential during development as it acts as a retrograde signal from mitochondria to the nucleus to slow down cell proliferation if mitochondrial energy output is low. This Drosophila ananassae (Fruit fly) protein is Elongation factor G, mitochondrial (ico).